The primary structure comprises 382 residues: Protein RecA (382 aa).

An ATP-binding site is contributed by 79-86; that stretch reads GPESSGKT. The segment at 362 to 382 is disordered; the sequence is ATKSAAKGSEVQADVKTKGAA.

Belongs to the RecA family.

Its subcellular location is the cytoplasm. Its function is as follows. Can catalyze the hydrolysis of ATP in the presence of single-stranded DNA, the ATP-dependent uptake of single-stranded DNA by duplex DNA, and the ATP-dependent hybridization of homologous single-stranded DNAs. It interacts with LexA causing its activation and leading to its autocatalytic cleavage. The chain is Protein RecA from Synechococcus sp. (strain WH7803).